The sequence spans 475 residues: Ribulose bisphosphate carboxylase large chain (475 aa).

Positions 1–2 (MS) are excised as a propeptide. An N-acetylproline modification is found at P3. K14 carries the N6,N6,N6-trimethyllysine modification. Residues N123 and T173 each contribute to the substrate site. The active-site Proton acceptor is K175. K177 serves as a coordination point for substrate. Mg(2+) is bound by residues K201, D203, and E204. K201 bears the N6-carboxylysine mark. H294 serves as the catalytic Proton acceptor. Positions 295, 327, and 379 each coordinate substrate.

It belongs to the RuBisCO large chain family. Type I subfamily. In terms of assembly, heterohexadecamer of 8 large chains and 8 small chains. Mg(2+) serves as cofactor.

Its subcellular location is the plastid. It localises to the chloroplast. The enzyme catalyses 2 (2R)-3-phosphoglycerate + 2 H(+) = D-ribulose 1,5-bisphosphate + CO2 + H2O. It carries out the reaction D-ribulose 1,5-bisphosphate + O2 = 2-phosphoglycolate + (2R)-3-phosphoglycerate + 2 H(+). Its function is as follows. RuBisCO catalyzes two reactions: the carboxylation of D-ribulose 1,5-bisphosphate, the primary event in carbon dioxide fixation, as well as the oxidative fragmentation of the pentose substrate in the photorespiration process. Both reactions occur simultaneously and in competition at the same active site. The sequence is that of Ribulose bisphosphate carboxylase large chain from Chlorella vulgaris (Green alga).